A 161-amino-acid polypeptide reads, in one-letter code: 2-C-methyl-D-erythritol 2,4-cyclodiphosphate synthase (161 aa).

A divalent metal cation-binding residues include aspartate 10 and histidine 12. Residues 10 to 12 (DVH) and 36 to 37 (HS) contribute to the 4-CDP-2-C-methyl-D-erythritol 2-phosphate site. Histidine 44 contributes to the a divalent metal cation binding site. 4-CDP-2-C-methyl-D-erythritol 2-phosphate is bound by residues 58–60 (DIG), 63–67 (FPDTD), 134–137 (TTTE), phenylalanine 141, and arginine 144.

It belongs to the IspF family. Homotrimer. It depends on a divalent metal cation as a cofactor.

The catalysed reaction is 4-CDP-2-C-methyl-D-erythritol 2-phosphate = 2-C-methyl-D-erythritol 2,4-cyclic diphosphate + CMP. The protein operates within isoprenoid biosynthesis; isopentenyl diphosphate biosynthesis via DXP pathway; isopentenyl diphosphate from 1-deoxy-D-xylulose 5-phosphate: step 4/6. Functionally, involved in the biosynthesis of isopentenyl diphosphate (IPP) and dimethylallyl diphosphate (DMAPP), two major building blocks of isoprenoid compounds. Catalyzes the conversion of 4-diphosphocytidyl-2-C-methyl-D-erythritol 2-phosphate (CDP-ME2P) to 2-C-methyl-D-erythritol 2,4-cyclodiphosphate (ME-CPP) with a corresponding release of cytidine 5-monophosphate (CMP). The chain is 2-C-methyl-D-erythritol 2,4-cyclodiphosphate synthase from Shewanella putrefaciens (strain CN-32 / ATCC BAA-453).